Reading from the N-terminus, the 223-residue chain is Triosephosphate isomerase (223 aa).

Residue 6-8 participates in substrate binding; the sequence is NLK. Catalysis depends on His-86, which acts as the Electrophile. The Proton acceptor role is filled by Glu-151. Residues Gly-157 and Ser-187 each coordinate substrate.

It belongs to the triosephosphate isomerase family. In terms of assembly, homodimer.

Its subcellular location is the cytoplasm. The catalysed reaction is D-glyceraldehyde 3-phosphate = dihydroxyacetone phosphate. It participates in carbohydrate biosynthesis; gluconeogenesis. It functions in the pathway carbohydrate degradation; glycolysis; D-glyceraldehyde 3-phosphate from glycerone phosphate: step 1/1. Its function is as follows. Involved in the gluconeogenesis. Catalyzes stereospecifically the conversion of dihydroxyacetone phosphate (DHAP) to D-glyceraldehyde-3-phosphate (G3P). The polypeptide is Triosephosphate isomerase (Campylobacter jejuni subsp. jejuni serotype O:2 (strain ATCC 700819 / NCTC 11168)).